Here is a 284-residue protein sequence, read N- to C-terminus: 2-dehydro-3-deoxyphosphooctonate aldolase (284 aa).

It belongs to the KdsA family.

It localises to the cytoplasm. The enzyme catalyses D-arabinose 5-phosphate + phosphoenolpyruvate + H2O = 3-deoxy-alpha-D-manno-2-octulosonate-8-phosphate + phosphate. It participates in carbohydrate biosynthesis; 3-deoxy-D-manno-octulosonate biosynthesis; 3-deoxy-D-manno-octulosonate from D-ribulose 5-phosphate: step 2/3. It functions in the pathway bacterial outer membrane biogenesis; lipopolysaccharide biosynthesis. The chain is 2-dehydro-3-deoxyphosphooctonate aldolase from Vibrio vulnificus (strain CMCP6).